We begin with the raw amino-acid sequence, 90 residues long: MEYSYPLNPDWTTEEMTIVVQFLEAIERAYEKGIDTVELKDKYKEFKQVVPAKGEEKRIGIDFEKASGYSAYKVMQLVKNATTSKIKMQP.

It belongs to the UPF0223 family.

This chain is UPF0223 protein lwe1035, found in Listeria welshimeri serovar 6b (strain ATCC 35897 / DSM 20650 / CCUG 15529 / CIP 8149 / NCTC 11857 / SLCC 5334 / V8).